The sequence spans 579 residues: Zinc finger protein 382 (579 aa).

The segment covering 1–12 (MGRPGRKPRGRA) has biased composition (basic residues). The disordered stretch occupies residues 1 to 37 (MGRPGRKPRGRARPGLFPFPKEELRQGGSSPANLNAM). The segment at 12 to 135 (ARPGLFPFPK…DKPPKSIVII (124 aa)) is mediates interaction with TRIM28. A compositionally biased stretch (polar residues) spans 27-36 (GGSSPANLNA). 2 represses transcription regions span residues 40-81 (GPVS…FISV) and 105-240 (IFPS…PEQR). Positions 42–113 (VSFKDVTVDF…RIFPSQSYLE (72 aa)) constitute a KRAB domain. The C2H2-type 1; degenerate zinc finger occupies 241–263 (FEYNKCDSSFLMTGVEFPHGRAH). C2H2-type zinc fingers lie at residues 325–347 (FQCPYCGNSFRRKSYLIEHERIH), 353–375 (YICCQCGRAFRQKTALTLHEKTH), 381–403 (YLCVDCGKSFRQKATLTRHHKAH), 409–431 (YECTQCGSAFGKKSYLIDHQRTH), 437–459 (YQCTECGKAFIQKTTLTVHQRTH), 465–487 (YICSECGKSFCQKTTLTLHQRIH), 493–515 (YICSDCGKSFRQKAILTVHYRIH), 521–543 (NGCPQCGKAFSRKSNLIRHQKIH), and 549–571 (YECQECGKFFSCKSNLITHQKTH). Residues 325–579 (FQCPYCGNSF…THKTETMRFQ (255 aa)) are required for transcriptional repression activity; probably mediates sequence-specific DNA-binding.

The protein belongs to the krueppel C2H2-type zinc-finger protein family. In terms of assembly, interacts with TRIM28; enhances the transcriptional repressor activity.

It is found in the nucleus. Functions as a sequence-specific transcriptional repressor. This chain is Zinc finger protein 382 (Znf382), found in Mus musculus (Mouse).